Here is a 376-residue protein sequence, read N- to C-terminus: Aspartate-semialdehyde dehydrogenase (376 aa).

Residues 11-14, 38-39, and Q74 contribute to the NADP(+) site; these read RGMV and TS. A phosphate-binding site is contributed by R103. The Acyl-thioester intermediate role is filled by C136. Q163 is a substrate binding site. Residues 166 to 167 and P194 contribute to the NADP(+) site; that span reads SG. E242 contacts substrate. K245 is a binding site for phosphate. R273 serves as a coordination point for substrate. H280 functions as the Proton acceptor in the catalytic mechanism. Q356 contacts NADP(+).

The protein belongs to the aspartate-semialdehyde dehydrogenase family. As to quaternary structure, homodimer.

The enzyme catalyses L-aspartate 4-semialdehyde + phosphate + NADP(+) = 4-phospho-L-aspartate + NADPH + H(+). It participates in amino-acid biosynthesis; L-lysine biosynthesis via DAP pathway; (S)-tetrahydrodipicolinate from L-aspartate: step 2/4. It functions in the pathway amino-acid biosynthesis; L-methionine biosynthesis via de novo pathway; L-homoserine from L-aspartate: step 2/3. The protein operates within amino-acid biosynthesis; L-threonine biosynthesis; L-threonine from L-aspartate: step 2/5. In terms of biological role, catalyzes the NADPH-dependent formation of L-aspartate-semialdehyde (L-ASA) by the reductive dephosphorylation of L-aspartyl-4-phosphate. This chain is Aspartate-semialdehyde dehydrogenase, found in Bordetella pertussis (strain Tohama I / ATCC BAA-589 / NCTC 13251).